Reading from the N-terminus, the 312-residue chain is DNA-directed RNA polymerase subunit alpha (312 aa).

Residues Met-1–Thr-229 are alpha N-terminal domain (alpha-NTD). Residues Pro-240–Val-312 are alpha C-terminal domain (alpha-CTD).

Belongs to the RNA polymerase alpha chain family. As to quaternary structure, in cyanobacteria the RNAP catalytic core is composed of 2 alpha, 1 beta, 1 beta', 1 gamma and 1 omega subunit. When a sigma factor is associated with the core the holoenzyme is formed, which can initiate transcription.

It catalyses the reaction RNA(n) + a ribonucleoside 5'-triphosphate = RNA(n+1) + diphosphate. Functionally, DNA-dependent RNA polymerase catalyzes the transcription of DNA into RNA using the four ribonucleoside triphosphates as substrates. The protein is DNA-directed RNA polymerase subunit alpha of Prochlorococcus marinus (strain AS9601).